A 155-amino-acid polypeptide reads, in one-letter code: Small ribosomal subunit protein uS7 (155 aa).

Belongs to the universal ribosomal protein uS7 family. In terms of assembly, part of the 30S ribosomal subunit. Contacts proteins S9 and S11.

One of the primary rRNA binding proteins, it binds directly to 16S rRNA where it nucleates assembly of the head domain of the 30S subunit. Is located at the subunit interface close to the decoding center, probably blocks exit of the E-site tRNA. The polypeptide is Small ribosomal subunit protein uS7 (Amoebophilus asiaticus (strain 5a2)).